A 498-amino-acid chain; its full sequence is ADP,ATP carrier protein 1 (498 aa).

Residues 1–33 (MSTSKSENYLSELRKIIWPIEQYENKKFLPLAF) lie on the Cytoplasmic side of the membrane. Residues 34-54 (MMFCILLNYSTLRSIKDGFVV) form a helical membrane-spanning segment. Cysteines 37 and 85 form a disulfide. Topologically, residues 55–67 (TDIGTESISFLKT) are extracellular. The helical transmembrane segment at 68 to 88 (YIVLPSAVIAMIIYVKLCDIL) threads the bilayer. The Cytoplasmic segment spans residues 89 to 92 (KQEN). A helical transmembrane segment spans residues 93-113 (VFYVITSFFLGYFALFAFVLY). Over 114–147 (PYPDLVHPDHKTIESLSLAYPNFKWFIKIVGKWS) the chain is Extracellular. The chain crosses the membrane as a helical span at residues 148-168 (FASFYTIAELWGTMMLSLLFW). Residues 169-184 (QFANQITKIAEAKRFY) are Cytoplasmic-facing. A helical transmembrane segment spans residues 185–205 (SMFGLLANLALPVTSVVIGYF). Topologically, residues 206–218 (LHEKTQIVAEHLK) are extracellular. A helical transmembrane segment spans residues 219–239 (FVPLFVIMITSSFLIILTYRW). Residues 240-279 (MNKNVLTDPRLYDPALVKEKKTKAKLSFIESLKMIFTSKY) are Cytoplasmic-facing. Residues 280 to 300 (VGYIALLIIAYGVSVNLVEGV) form a helical membrane-spanning segment. Topologically, residues 301–320 (WKSKVKELYPTKEAYTIYMG) are extracellular. The chain crosses the membrane as a helical span at residues 321 to 341 (QFQFYQGWVAIAFMLIGSNIL). Residues 342–348 (RKVSWLT) are Cytoplasmic-facing. The helical transmembrane segment at 349–369 (AAMITPLMMFITGAAFFSFIF) threads the bilayer. Over 370 to 379 (FDSVIAMNLT) the chain is Extracellular. The chain crosses the membrane as a helical span at residues 380-400 (GILASSPLTLAVMIGMIQNVL). At 401 to 438 (SKGVKYSLFDATKNMAYIPLDKDLRVKGQAAVEVIGGR) the chain is on the cytoplasmic side. Residue 436–442 (GGRLGKS) participates in ATP binding. Residues 439-459 (LGKSGGAIIQSTFFILFPVFG) form a helical membrane-spanning segment. Residues 460–465 (FIEATP) lie on the Extracellular side of the membrane. The helical transmembrane segment at 466-486 (YFASIFFIIVILWIFAVKGLN) threads the bilayer. Residues 487-498 (KEYQVLVNKNEK) lie on the Cytoplasmic side of the membrane.

This sequence belongs to the ADP/ATP translocase tlc family.

The protein resides in the cell membrane. Provides the rickettsial cell with host ATP in exchange for rickettsial ADP. This is an obligate exchange system. This energy acquiring activity is an important component of rickettsial parasitism. The protein is ADP,ATP carrier protein 1 (tlcA) of Rickettsia prowazekii (strain Madrid E).